The chain runs to 70 residues: UPF0337 protein BC_3635 (70 aa).

Belongs to the UPF0337 (CsbD) family.

The polypeptide is UPF0337 protein BC_3635 (Bacillus cereus (strain ATCC 14579 / DSM 31 / CCUG 7414 / JCM 2152 / NBRC 15305 / NCIMB 9373 / NCTC 2599 / NRRL B-3711)).